The sequence spans 292 residues: uncharacterized protein (292 aa).

It localises to the virion. This is an uncharacterized protein from Acanthamoeba polyphaga (Amoeba).